An 89-amino-acid chain; its full sequence is MAHKKAGGSSRNGRDSAGKRLGIKAFGGQIVIPGNIIARQRGTTWHPGLNVGMGTDHTLFAKAEGRVEFRAKTGGRTFVSVIPVAEAAE.

The protein belongs to the bacterial ribosomal protein bL27 family.

This is Large ribosomal subunit protein bL27 from Afipia carboxidovorans (strain ATCC 49405 / DSM 1227 / KCTC 32145 / OM5) (Oligotropha carboxidovorans).